We begin with the raw amino-acid sequence, 437 residues long: Transmembrane protease serine 4 (437 aa).

Residues 1–32 are Cytoplasmic-facing; it reads MLQDPDSDQPLNSLDVKPLRKPRIPMETFRKV. The helical; Signal-anchor for type II membrane protein transmembrane segment at 33–53 threads the bilayer; sequence GIPIIIALLSLASIIIVVVLI. The Extracellular portion of the chain corresponds to 54–437; sequence KVILDKYYFL…WIYNVWKAEL (384 aa). The region spanning 61-93 is the LDL-receptor class A domain; that stretch reads YFLCGQPLHFIPRKQLCDGELDCPLGEDEEHCV. Disulfide bonds link Cys64–Cys83, Cys77–Cys92, Cys127–Cys183, Cys140–Cys193, Cys196–Cys310, Cys230–Cys246, Cys356–Cys372, and Cys383–Cys410. An SRCR domain is found at 94–204; that stretch reads KSFPEGPAVA…ACGKSLKTPR (111 aa). N-linked (GlcNAc...) asparagine glycosylation is found at Asn130 and Asn178. Residues 205-434 enclose the Peptidase S1 domain; the sequence is VVGVEEASVD…YLNWIYNVWK (230 aa). Catalysis depends on charge relay system residues His245 and Asp290. Ser387 (charge relay system) is an active-site residue.

This sequence belongs to the peptidase S1 family. Post-translationally, proteolytically processed; probably by an autocatalytic mechanism. High levels in pancreatic, gastric, colorectal and ampullary cancer. Very weak expression in normal gastrointestinal and urogenital tract. Coexpressed with ACE2 within mature enterocytes.

The protein resides in the cell membrane. Its subcellular location is the secreted. Plasma membrane-anchored serine protease that directly induces processing of pro-uPA/PLAU into the active form through proteolytic activity. Seems to be capable of activating ENaC. Its function is as follows. (Microbial infection) In gut epithelial cells, facilitates human coronavirus SARS-CoV-2 infection through, at least, the cleavage of coronavirus spike glycoproteins which activates the glycoprotein for host cell entry. In Homo sapiens (Human), this protein is Transmembrane protease serine 4.